A 494-amino-acid polypeptide reads, in one-letter code: Glycerol kinase (494 aa).

Position 13 (T13) interacts with ADP. ATP contacts are provided by T13, T14, and S15. Residue T13 participates in sn-glycerol 3-phosphate binding. ADP is bound at residue R17. Positions 83, 84, 135, and 244 each coordinate sn-glycerol 3-phosphate. 5 residues coordinate glycerol: R83, E84, Y135, D244, and Q245. The ADP site is built by T266 and G309. ATP-binding residues include T266, G309, Q313, and G410. 2 residues coordinate ADP: G410 and N414.

It belongs to the FGGY kinase family.

The enzyme catalyses glycerol + ATP = sn-glycerol 3-phosphate + ADP + H(+). The protein operates within polyol metabolism; glycerol degradation via glycerol kinase pathway; sn-glycerol 3-phosphate from glycerol: step 1/1. With respect to regulation, inhibited by fructose 1,6-bisphosphate (FBP). Its function is as follows. Key enzyme in the regulation of glycerol uptake and metabolism. Catalyzes the phosphorylation of glycerol to yield sn-glycerol 3-phosphate. The polypeptide is Glycerol kinase (Shewanella putrefaciens (strain CN-32 / ATCC BAA-453)).